The primary structure comprises 232 residues: Phosphate import ATP-binding protein PstB (232 aa).

The region spanning 1-227 (MFNINMEIKE…PKDRRTENYI (227 aa)) is the ABC transporter domain. Residue 18–25 (GPSGCGKT) coordinates ATP.

The protein belongs to the ABC transporter superfamily. Phosphate importer (TC 3.A.1.7) family. In terms of assembly, the complex is composed of two ATP-binding proteins (PstB), two transmembrane proteins (PstC and PstA) and a solute-binding protein (PstS).

The protein resides in the cell membrane. It catalyses the reaction phosphate(out) + ATP + H2O = ADP + 2 phosphate(in) + H(+). In terms of biological role, part of the ABC transporter complex PstSACB involved in phosphate import. Responsible for energy coupling to the transport system. The chain is Phosphate import ATP-binding protein PstB from Mycoplasma mycoides subsp. mycoides SC (strain CCUG 32753 / NCTC 10114 / PG1).